The following is a 233-amino-acid chain: Small ribosomal subunit protein uS5 (233 aa).

2 stretches are compositionally biased toward basic and acidic residues: residues 1–12 and 39–54; these read MANESEIQKTEN and RGRDGRGRRDDRRNEE. The interval 1-54 is disordered; that stretch reads MANESEIQKTENAEVANAANGTNPNNERRGRGGRGRGGRGRDGRGRRDDRRNEE. Residues 59–122 form the S5 DRBM domain; sequence LIEKLVHINR…AAAKKTMIRV (64 aa).

This sequence belongs to the universal ribosomal protein uS5 family. In terms of assembly, part of the 30S ribosomal subunit. Contacts proteins S4 and S8.

Its function is as follows. With S4 and S12 plays an important role in translational accuracy. In terms of biological role, located at the back of the 30S subunit body where it stabilizes the conformation of the head with respect to the body. In Zymomonas mobilis subsp. mobilis (strain ATCC 31821 / ZM4 / CP4), this protein is Small ribosomal subunit protein uS5.